Reading from the N-terminus, the 906-residue chain is Toll-like receptor 12 (906 aa).

The signal sequence occupies residues Met1 to Ser21. Residues Thr22–Lys709 are Extracellular-facing. An N-linked (GlcNAc...) asparagine glycan is attached at Asn59. LRR repeat units lie at residues Phe91 to Leu114, Gly115 to Asp140, Ile142 to Gly170, Ser198 to Gly222, Gln224 to Lys247, His267 to Ser290, Cys291 to Ala314, Pro316 to Thr338, Val341 to Cys364, Pro366 to Glu388, Leu389 to Ala412, Pro414 to Gly436, Leu462 to Phe484, Pro485 to Gly508, and Phe510 to Asn533. An N-linked (GlcNAc...) asparagine glycan is attached at Asn336. The N-linked (GlcNAc...) asparagine glycan is linked to Asn505. N-linked (GlcNAc...) asparagine glycosylation occurs at Asn552. 2 LRR repeats span residues Leu562–Glu586 and Leu591–Arg614. Residues Leu710 to Ala730 form a helical membrane-spanning segment. Over Arg731–Gly906 the chain is Cytoplasmic. One can recognise a TIR domain in the interval Phe759 to Leu905.

Belongs to the Toll-like receptor family. Binds MYD88 via their respective TIR domains. In terms of tissue distribution, macrophages, liver, kidney and bladder epithelial cells.

It is found in the membrane. Its function is as follows. Participates in the innate immune response to microbial agents. Acts via MYD88 and TRAF6, leading to NF-kappa-B activation, cytokine secretion and the inflammatory response. Plays a role in preventing infection of internal organs of the urogenital system. The chain is Toll-like receptor 12 from Mus musculus (Mouse).